Reading from the N-terminus, the 536-residue chain is Probable cytochrome P450 520A1 (536 aa).

The helical transmembrane segment at Met-1–Lys-21 threads the bilayer. Position 479 (Cys-479) interacts with heme.

The protein belongs to the cytochrome P450 family. Heme is required as a cofactor.

It localises to the membrane. The sequence is that of Probable cytochrome P450 520A1 (cyp520A1) from Dictyostelium discoideum (Social amoeba).